The following is a 336-amino-acid chain: UPF0324 membrane protein PM1461 (336 aa).

10 helical membrane-spanning segments follow: residues 5-23 (TLFL…VNLL), 30-52 (LNAN…NTFY), 62-84 (GVIF…RLTL), 91-113 (GINA…LWLG), 123-140 (IVYL…AAIM), 153-175 (VSIA…PLMY), 221-238 (MIRV…SWLL), 250-271 (ISIP…FSLI), 275-297 (IVAW…LGLT), and 310-332 (PLIL…NVGI).

This sequence belongs to the UPF0324 family.

Its subcellular location is the cell membrane. This Pasteurella multocida (strain Pm70) protein is UPF0324 membrane protein PM1461.